The following is a 640-amino-acid chain: 1,4-alpha-glucan branching enzyme GlgB (640 aa).

The Nucleophile role is filled by Asp318. The active-site Proton donor is the Glu371.

This sequence belongs to the glycosyl hydrolase 13 family. GlgB subfamily. As to quaternary structure, monomer.

The enzyme catalyses Transfers a segment of a (1-&gt;4)-alpha-D-glucan chain to a primary hydroxy group in a similar glucan chain.. It participates in glycan biosynthesis; glycogen biosynthesis. In terms of biological role, catalyzes the formation of the alpha-1,6-glucosidic linkages in glycogen by scission of a 1,4-alpha-linked oligosaccharide from growing alpha-1,4-glucan chains and the subsequent attachment of the oligosaccharide to the alpha-1,6 position. This chain is 1,4-alpha-glucan branching enzyme GlgB, found in Francisella tularensis subsp. holarctica (strain FTNF002-00 / FTA).